Consider the following 963-residue polypeptide: Longitudinals lacking protein, isoforms J/P/Q/S/Z (963 aa).

The region spanning 32-97 (VDCTLAAEGK…MYRGEVNISQ (66 aa)) is the BTB domain. Disordered regions lie at residues 115–200 (LSDN…SSVL), 228–340 (SSGP…ASAS), 447–469 (DAQQ…RIRV), and 482–520 (GKSS…VSTT). Composition is skewed to low complexity over residues 162–175 (SGDV…SSSP), 228–251 (SSGP…LTST), 263–293 (TSST…QTTS), and 329–340 (NSATGPNPASAS). Polar residues predominate over residues 491-512 (KLTQSKKSLISDAKTTNKTSTP). Residues 849–871 (WVCRNCNRTYKWKNSLKCHLKNE) form a C2H2-type 1; degenerate zinc finger. The segment at 878-901 (YFCSKMCGYATNVHSNLKRHLNTK) adopts a C2H2-type 2; degenerate zinc-finger fold. Residues 900–963 (TKCRDREKDA…YTLVFQNDSA (64 aa)) are disordered. Over residues 901–915 (KCRDREKDADDEKKP) the composition is skewed to basic and acidic residues. Over residues 937–953 (SSSNNNNNGGGSSTSST) the composition is skewed to low complexity. Over residues 954-963 (YTLVFQNDSA) the composition is skewed to polar residues.

As to expression, by stage 11, isoform Q, isoform P and isoform Z are expressed throughout the mesoderm. From stage 15, expression of isoform P expands to all tissues, whereas expression of isoform Z and isoform Q becomes restricted during later stages; starting from stage 14 to 16, isoform Z is expressed in muscle, and isoform Q and isoform Z are expressed in the CNS. For some isoforms, expression is also seen in specific types of cells in the embryo; isoform Z is expressed in the ventral furrow at stage 5, and isoform Q is expressed around the tracheal pits at stage 11. Isoform Z also shows transient enrichment in a dorsal cell layer in the CNS at stages 13 and 14.

Its subcellular location is the nucleus. Functionally, putative transcription factor required for axon growth and guidance in the central and peripheral nervous systems. Repels CNS axons away from the midline by promoting the expression of the midline repellent sli and its receptor robo. The polypeptide is Longitudinals lacking protein, isoforms J/P/Q/S/Z (Drosophila melanogaster (Fruit fly)).